The primary structure comprises 426 residues: Glutamate-1-semialdehyde 2,1-aminomutase (426 aa).

K265 bears the N6-(pyridoxal phosphate)lysine mark.

Belongs to the class-III pyridoxal-phosphate-dependent aminotransferase family. HemL subfamily. Homodimer. Pyridoxal 5'-phosphate serves as cofactor.

The protein resides in the cytoplasm. The enzyme catalyses (S)-4-amino-5-oxopentanoate = 5-aminolevulinate. The protein operates within porphyrin-containing compound metabolism; protoporphyrin-IX biosynthesis; 5-aminolevulinate from L-glutamyl-tRNA(Glu): step 2/2. This Escherichia coli O157:H7 protein is Glutamate-1-semialdehyde 2,1-aminomutase.